Here is a 216-residue protein sequence, read N- to C-terminus: Cytochrome c oxidase assembly protein CtaG (216 aa).

Positions 1 to 23 (MTDAPQHPQQPATGTPATPKAAP) are enriched in low complexity. A disordered region spans residues 1-24 (MTDAPQHPQQPATGTPATPKAAPR). Topologically, residues 1–26 (MTDAPQHPQQPATGTPATPKAAPRVG) are cytoplasmic. A helical; Signal-anchor for type II membrane protein membrane pass occupies residues 27–49 (RDVRIGATCGLLVALMVGAAYAA). At 50–216 (VPFYNWFCRA…SEPDRPGGSI (167 aa)) the chain is on the periplasmic side.

Belongs to the COX11/CtaG family.

Its subcellular location is the cell inner membrane. Functionally, exerts its effect at some terminal stage of cytochrome c oxidase synthesis, probably by being involved in the insertion of the copper B into subunit I. The protein is Cytochrome c oxidase assembly protein CtaG of Nitrobacter hamburgensis (strain DSM 10229 / NCIMB 13809 / X14).